The chain runs to 782 residues: Probable cyclic di-GMP phosphodiesterase PdeI (782 aa).

A run of 2 helical transmembrane segments spans residues 12–32 (LIILFLLAALSFIGLFFIINY) and 286–306 (LFYLPFAFIIIVLLVVYLMTT). The EAL domain maps to 527–781 (NIWIARNIRH…AWDKSGKLVK (255 aa)).

The protein resides in the cell membrane. The catalysed reaction is 3',3'-c-di-GMP + H2O = 5'-phosphoguanylyl(3'-&gt;5')guanosine + H(+). Its function is as follows. Phosphodiesterase (PDE) that catalyzes the hydrolysis of cyclic-di-GMP (c-di-GMP) to 5'-pGpG. Overexpression reduces biofilm formation. Cyclic-di-GMP is a second messenger which controls cell surface-associated traits in bacteria. The chain is Probable cyclic di-GMP phosphodiesterase PdeI from Escherichia coli (strain K12).